A 191-amino-acid polypeptide reads, in one-letter code: RNA polymerase sigma factor CnrH (191 aa).

The Polymerase core binding signature appears at 49–62 (DVVQDTFVAAWHAL). Residues 156–175 (QPEAAAVLGLSVKAVEGRIG) constitute a DNA-binding region (H-T-H motif).

This sequence belongs to the sigma-70 factor family. ECF subfamily.

Sigma factors are initiation factors that promote the attachment of RNA polymerase to specific initiation sites and are then released. This sigma factor regulates the genes for a membrane-located efflux system that confers resistance to nickel and cobalt. Functionally, cnrH alone is able to activate CNR expression, while both CnrY and CrnX are needed for nickel induction of cnrH. Binds DNA in an RNA polymerase-dependent fashion. CnrH may be controlled by a CnrYX transmembrane anti-sigma factor complex which binds CnrH in the absence of Ni(2+). If Ni(2+) appears in the periplasm, it may be bound by CnrR (CnrX); the signal then would be transmitted by CnrY into the cytoplasm and CnrH would be released. In Cupriavidus metallidurans (strain ATCC 43123 / DSM 2839 / NBRC 102507 / CH34) (Ralstonia metallidurans), this protein is RNA polymerase sigma factor CnrH (cnrH).